Consider the following 86-residue polypeptide: UPF0297 protein SERP1181 (86 aa).

This sequence belongs to the UPF0297 family.

In Staphylococcus epidermidis (strain ATCC 35984 / DSM 28319 / BCRC 17069 / CCUG 31568 / BM 3577 / RP62A), this protein is UPF0297 protein SERP1181.